A 72-amino-acid polypeptide reads, in one-letter code: SRY-related protein ADW5 (72 aa).

A DNA-binding region (HMG box) is located at residues 1–69 (VKRPMNAFMV…KHMADYPDYK (69 aa)).

Its subcellular location is the nucleus. The polypeptide is SRY-related protein ADW5 (Alligator mississippiensis (American alligator)).